A 5386-amino-acid chain; its full sequence is MSSATSPCEMAHKNRLNQTLSILNGQPLLLDGPDLLHQLVPRLHHDANAIDFLEHGSKRRKFSYTTLHSLSDAFAARITEILGKLESASSIIPVFLPQSPELYVVLLAILKAGKAFCPLNLDTPTERLKFILDDISADIIITFESYSEHIRTATNIHVVSANRELSGCHDTFHHHSPHLSPDNLAYVLYTSGSTGLPKAVSVSHRAVTQSLLAHDPHIPAFSRFLQFAAPTFDVSIFEIFFPWFRGKTLVGCTRTQMLDDLPGTIASLDVDAAELTPTVVSSLLSGRSSVPGLKLLLTIGEMLTQPVIDEFGGDATKESILWAMYGPTEAAIHCTIWPQFSTSDSTNTIGHPLDTVSAFILASSTGLHTSPIDILPIGQAGELAIGGPQVAKEYLHRPDLTRASFVEHPYYGRLYRTGDRARINEQGLLECLGRVVAGQVKLRGQRIELGEIEQAIMKTRGCRAVTAMVIQDNLVAFCSGRDGMSRGAVLTTCKHWLPASMIPSDVFVIDVMPQLPSGKVDRKSLEKAYLHSHPNGSSSSLAISPKDPIGHSVWSVVSHHTTQNIGLETNLTSIGIDSLKSIRIASALRRKGYSLGAIEVLSAATLADLIEVCRESKPVDFSSQDKETKPGAFIDTKNLQLNGWRHNVALILPCTPLQEAMLAETRSKPTAYCNWIEVELSVAYTYEQIQDALLFLAQENEILRTGFCIDSQHTTVFSQVIWKELSLSQIQKVASFSNQYSMQSDHDFLRPFGVQIKTHCKLPRLLFQIHHALYDGWSLDLLLRDLDHCLRGKQDLKRPSFREVVRYLDDDRRLNKTQNSTNYWKSLLGDYIPTTLPNYHGKLVHNASIHRFFGQSSVSRHNLFECAHHSAINPQVYFQAATAFVLSLYTGSSDVVLGNVTSGRTIPVAGIEDIIGPCIASLPFRIDFADTYCVRDVLKRTQSTNRDSLRYSQLPLREIARAVNVKPGARLFETLFVWQQSMVEDEDDNASLIAKVVDSADELEFRITLEFEPVGDNILFRSTFDAATVSEHQIQYLFRQIDEVVEMFMVDADRHVSAINQCFTTPSLSIANPTPLEQRFDHGPSHAVEKWAATDPHRTAIIFGHEVNGSIKVKDTMTYSMLNSRANQLARLLAEHGVTNDQLVCIIMEKSVNLYTCILAVLKLGCGYLPLVPDTPIDRVKTILNDAQIAVCMSELSLSATLRSHLSVDIIDFDLAALSDYCDRNLEIPYNGQHLAYAVFTSGSTGTPKGVLVTQDNLMSNLHYLSTIYPFSADSRLLQACSQAFDVSVFEIFFTWYVGICLCSATKEHLFRDFEAAIDQLKVTHLSLTPTVAALVDPKNVPKVEFLVTAGEAVTEHVRRKWAGRGLYQGYGPSETTNICTVRVAVTPDDLINNIGSPFANTSAFVLDPESQDILPRGAVGELCFGGSQVFRGYLNRPELNAQKIIQHPTYGRIYRSGDMGILLPDDSILSTGRTDDQVKIRGQRVELGEVTSVILDHGAVWDCVTLALEQSTNSKTLVSFWVPREDSSSRVESLEPSKFTTTISELFDLLSRRVPSYMVPSHLIPISCLPMTPQAKIDKRFLQRLFSSCEEHTLNNATNSNSITETEEGELLSQWERDVSQLLIRMLATSSDKLKRTSSFFNLGIDSVSAIRFCSELRKAGLGDYSVSEVLKHPSIASLASLKKLQSSTTTTTTTMDKTLSVDASHIFTTNQLERIRSTVDMNGVRATKILPCTPLQEAMISSGLSSPGQAYCNVMVFDVKGDLQQLQRCWKTVIQRHEIFRTSFVATDNPLYSFAQVIVEGYGMGWHEDSIDSGLQLRVSKILFDLMEANKPPVYFSLNREEDSAKLLFCCHHALYDGIAMSTLLAEVQELYHGRQLLPPVSYDVYLKRMLEQNLDEADKYWSALLEGFEPTSFPSLTGKRVREYEAFTSSSRRLSMSLDSVRNSCQNSSVSLLSVVHAAWAKLLHFYTHESDICFGNIVSGRSFPGEHLERLVAPCFNTLPVRVDFDFGKSNRALVDLMHNQSIESLAYQLSPLRRIQKTTLKDGGRLFDSLVILQQPNVPLDSSIWRLEQDSGDMDIPVVCEVVQDQSEDALRLLMHYNNSLISETEASIVMETFDAALSSLIKFPDALSADTDMFPSNLWANYNTNFKRLESDSKFLHSGFERTALLHPDRIALDFWHSQGKKTTWSFEQLNREANQIAHALIRAGAWPDQVIPIHISKSPIYYASILGVLKSGAAFAPVHPDLPEARKQLMFKDLKPKIILCDDGSLLPEDLPDVTVLITQSMSSDDVSNPIIEDLKDTNLAYCLFTSGSTGVPKAVSMEHCAPIQTIESSRTIIPWNPQSRLLQYAAVTFDMCYYDCFLSWTFGFALCAAEQSDLLNDLSGVIKTLEADLLDLTPSVAETLKRADVPNVKWLYCIGEAMSSSVVKEWEGACVNSYGPTEAAFCTTITPLSKDESTSIIGKPFPTTSFAVFSEGSQTPLPALSIGELYIGGAQLARGYWGRANLTNDRFVSRCGQRFYKSGDMVRMLSDGNFEFMGRLDDQVKIRGLRVELGEINSILAELDPDLLSVTTQILLKGESSKEQLVSFMVLRQSIQESDIPTLQRKLKKLASARLPSYMVPQFFLVVDEIPKSMAGKIDKKALKHQWSKTESEVRNILAHISKTPTENISPLTSIYQLGLDSISAVQIASALRSQGYTIKATDVLKHTTCNDLAEHLDQISTSEAPESSPFDFHGFESRHRMQILRDHGIQDGNVAAVRPCTPLQNGMVSQFLAKEGAVYMNYLRLQLEPKVDLEKLKAAWSSTMERHSLLRTGFAHVNDPLFPFAMIEYTQVSVTLPWSAIREQKKSQSSNAWLQRIRAQSLKELYVPPWALRFVERNDQSFLDLAIFHALFDAQSLQNIFTDVTAFYKGLSLPPVPSLNEVVSHVIQSYKQDNSSGKEFWVELGKTANPSRFPNLAPLKCDPKPPIVCTRRSAKSLIDLENGCRQANTTMPAVGMASWLSLLSSYTGESSVTCGVVLSGRSSDATAHANFPCINTVPLAFTVANDTTKMLESITVLNAGIQEHQFKPLKEIQALMGFPNESLFDSIFAYQKLANNKDTSDLWTVVDENATIEYPVSIELEPKEERLEYRLTYFPHIIPREQASLILAQLDHLMESLIFHSQIPLAKTDYSQHLYSITPAKEDELPSDMKLLHELVEKTAQEHPQRIAFEFVSKESSGKRPVRKWTYRELDQEGNKIAQLLAAHNVKQNSLVGVCFDKCPEASFAMLGILKAGCAFVAIDPGAPAARQTFIIEDSDAQAVLSMSSQSAQFNAIAKVPVLNLDEVEWCSLSGQKLLQNSVIDPQDRSYCLYTSGTTGTPKGCELTHENAVQALLAFQRLFAGHWDVDSRWLQFASFHFDVSVLEQYWSWSVGICVVSAPRDLIFEDLAGSIRDLNITHIDLTPSLAQILHPDDVPSLCKGVFITGGESLKQEILDVWGPKGVIYNGYGPTEATIGCTMYPRVPANGKPSNIGPQFDNVGSLVLRPGSDVPVLRGGVGELCVSGKLVGKGYLNRPDLTTERFPYLNRFSQRVYRTGDVVRILHDGTFHFLGRADDQVKLRGQRLEVAEINSVIKQSDSDISDVATLVLKHPKQQKEQLVSFVVCGKALKAQPEVLLGEVGGIASAKQACNDKLPPYMLPTHFVPLTSMPLNVNNKADGKALKKMYESLSSTDLQKLSATSLSRDEQWSKQEEKLRDVMLEALGADHESMSKNTSFYELGMDSISVIGVTQSLKQSGFTKVTTSMILQCPTIRRLAKSLAANSAMSNVRGSILAAQQSINAVNHRHRRKIAKRLSVKPSMIESLAPCTPLQQGMIARSMENGNGLYFNTFRFRLNMDVDEGKLRHAWETMYNSTQILRTVFVNTEEGYLQAVLGGIPFNGFIQTSTQDDDLISHMAQLHKDWLSLNDVDFRQPFQVHLVSAQKQKQLIVHIFHGLYDGNSIGLLLQGVWNSYERRDSMPDAPSFHTALAHGPLRIPDDAKSFWKDLILARTSSLPTLFDNSSQDAVVIARTMRAPANFDLIRRQLNVTAQAVVQACWFSVLHRHVKGDVATGIIVSGRSIEFEGADRVIGPMFNTIPYHHRAQRSESWSSIIERVHDFNIQAHPFQHTPLRDIMKWCKRSPSNPLFDNLFVYQVPQDNQEWAKNDLWTLLDDEAIADYPLAFEVEHRGGTELKLTLVTQGHVANDQIAAKLLDMFEEALDQAINDPSAVLELPADVDGAVENNTAIRSKLDDNNDISDFEWSDNAIAIREEIANLTANEMESISETTSIFELGLDSIDAIKLSSKLKKRGMELSVSGIMRGLTIEKMAQNMSMKNTQTTEAAPHFDLDAHKTKLAKCLYHQGFSADDIEEILPLTPLQEAMVAEMIASEYTRYFNHDVLKLSPDTDISKFQKAWTTVVMGSPILRTGFVEVDNPDIDLSFAQIIHRQPHDFYSHMSFGSRPDFASIFKDLRNDAIQRPLSTPLFHLTFIDTPDQSYLVLSIAHALYDGWSLSLLHSDVHRAYQNEFEARPSYQPSLAEIIKTSGPDAAGFWQDYLSGANGNTFPRRTLEPDEKSSTVHRHQENSKIALELIQSFARKNNVSLQTVGQTVFALVTASFTRSLDVTFGSVLSGRDEEETSQLMFPTMNTVAIRTILHGKSIELLRYVQDNFANIKQWQHYPLRKAMSQARLDGRLFDSLFIYQKRLEQQQNEGERLYTSVGGHSDVEYAVCVEMEVVKEALIWRCAVKDDVFDLEETRQLLKRMDDVLIHLMERAEAPVIDMTAEGTSVCGLPAFEEAEMHTGSGHVESGEDDGQDTPSTETTNRIRKILAAVSKTPEEEMTNDMTIFHMGLDSISAIKVSSLLRKQGVVLSVGEMLQAGSVEKMAKLADARATEPSKDDAIDSASLGEILKELNEAEVFKRAGVDVDNVVQMLPVTAGQLYMLSMWLNTNGSNFYPEFSYEFEADVAFEDLKKAWQALVTTNPILRTCFVSVGNHQVSYVQLVLRDIDIAITNVTEYGEEEIRNCIRKATTQQPWARLLVSRNSHSWTLRLKIHHALYDGISLPLLMQQFEDLCNGSVLNASRNDILADFISSTSSLSSSPQRRQFWETHLLSRTAPTQLKQPSHTPTTRLEIFRPSLTPIQTLDTTARHHGISPHALFLAIYAKLHSRLPHSTTTDDNIVLGIYLANRSLSCTPELPGAAIPTLNLVPLRVSTPQSRSVVESAKQVQAHLRHLNDATLATTSLVEIERWTGVKIDVFVNFLVDIDDQGARPKHAHQRVKISPTLRQQYYCSSFSRTSSVVQPEFMDFQALRNEHVNGVYLHAIDIEATVREGYLDVGIFAPGDMISLEQGEQLMDGLKGEVEGL.

The segment at 45 to 435 is adenylation 1; it reads HDANAIDFLE…QGLLECLGRV (391 aa). A Carrier 1 domain is found at 544–617; sequence SPKDPIGHSV…DLIEVCRESK (74 aa). An O-(pantetheine 4'-phosphoryl)serine modification is found at Ser578. A condensation 1 region spans residues 652–1059; that stretch reads LPCTPLQEAM…VDADRHVSAI (408 aa). The interval 1089–1482 is adenylation 2; sequence EKWAATDPHR…GRTDDQVKIR (394 aa). One can recognise a Carrier 2 domain in the interval 1611-1688; it reads ELLSQWERDV…SLASLKKLQS (78 aa). Position 1648 is an O-(pantetheine 4'-phosphoryl)serine (Ser1648). The interval 1731–2141 is condensation 2; sequence ILPCTPLQEA…ALSADTDMFP (411 aa). The tract at residues 2166-2551 is adenylation 3; the sequence is FERTALLHPD…GRLDDQVKIR (386 aa). The region spanning 2652–2725 is the Carrier 3 domain; it reads SKTESEVRNI…DLAEHLDQIS (74 aa). Residue Ser2686 is modified to O-(pantetheine 4'-phosphoryl)serine. Positions 2763-3174 are condensation 3; that stretch reads RPCTPLQNGM…HSQIPLAKTD (412 aa). Residues 3202-3603 form an adenylation 4 region; sequence EKTAQEHPQR…GRADDQVKLR (402 aa). A Carrier 4 domain is found at 3728–3805; the sequence is EQWSKQEEKL…RLAKSLAANS (78 aa). Residue Ser3765 is modified to O-(pantetheine 4'-phosphoryl)serine. Positions 3846–4250 are condensation 4; sequence LAPCTPLQQG…LDQAINDPSA (405 aa). The region spanning 4281–4357 is the Carrier 5 domain; the sequence is FEWSDNAIAI…KMAQNMSMKN (77 aa). Ser4318 carries the O-(pantetheine 4'-phosphoryl)serine modification. Residues 4391-4802 form a condensation 5 region; the sequence is EEILPLTPLQ…ERAEAPVIDM (412 aa). A disordered region spans residues 4821-4842; it reads HTGSGHVESGEDDGQDTPSTET. Residues 4840–4913 enclose the Carrier 6 domain; sequence TETTNRIRKI…KMAKLADARA (74 aa). Ser4874 bears the O-(pantetheine 4'-phosphoryl)serine mark. The condensation 6 stretch occupies residues 4952–5257; it reads QMLPVTAGQL…VQAHLRHLND (306 aa).

Belongs to the NRP synthetase family.

It functions in the pathway siderophore biosynthesis. In terms of biological role, nonribosomal peptide synthetase; part of the gene cluster that mediates the biosynthesis of hydroxamate-containing siderophores that play a critical role in virulence. Cochliobolus heterostrophus produces extracellular coprogen-type siderophores including coprogen, neocoprogen I and neocoprogen II, as well as the intracellular siderophore ferricrocin. The role of extracellular siderophores is to supply iron to the fungus during plant infection, and the intracellular ferricrocin is required for intracellular iron distribution and storage with a crucial role in ascus and ascospore development. SIDA2 catalyzes the conversion of L-ornithine to N(5)-hydroxyornithine, the first step in the biosynthesis of all hydroxamate-containing siderophores. The assembly of extracellular coprogen-type siderophores is then performed by the nonribosomal peptide synthetase (NRPS) NPS6 whereas the intracellular siderophore ferricrocin is assembled by NPS2. This chain is Nonribosomal peptide synthetase 2, found in Cochliobolus heterostrophus (strain C4 / ATCC 48331 / race T) (Southern corn leaf blight fungus).